The following is a 95-amino-acid chain: UPF0213 protein YPA_2977 (95 aa).

The GIY-YIG domain occupies 4–79; the sequence is SLWHLYLLRT…KQLSKQQKEK (76 aa).

This sequence belongs to the UPF0213 family.

The protein is UPF0213 protein YPA_2977 of Yersinia pestis bv. Antiqua (strain Antiqua).